Consider the following 232-residue polypeptide: tRNA (guanine-N(1)-)-methyltransferase (232 aa).

Residues Gly112 and 132–137 (IGDYVL) contribute to the S-adenosyl-L-methionine site.

This sequence belongs to the RNA methyltransferase TrmD family. Homodimer.

The protein resides in the cytoplasm. It catalyses the reaction guanosine(37) in tRNA + S-adenosyl-L-methionine = N(1)-methylguanosine(37) in tRNA + S-adenosyl-L-homocysteine + H(+). Functionally, specifically methylates guanosine-37 in various tRNAs. The chain is tRNA (guanine-N(1)-)-methyltransferase from Anaplasma phagocytophilum (strain HZ).